A 357-amino-acid chain; its full sequence is SNF1-related protein kinase regulatory subunit gamma-like PV42b (357 aa).

CBS domains follow at residues 16–97 (MIDK…DGES), 113–185 (HCPE…SSQL), 198–273 (AIHN…WLPL), and 293–351 (STPG…ALLS).

The protein belongs to the 5'-AMP-activated protein kinase gamma subunit family. Expressed highly in rosette leaves, cauline leaves, open flowers, developing siliques and dry seeds, but at a low level in stems and floral buds.

Functionally, plays redundant role with PV42a in regulating male gametogenesis and pollen tube guidance. The chain is SNF1-related protein kinase regulatory subunit gamma-like PV42b (PV42B) from Arabidopsis thaliana (Mouse-ear cress).